A 994-amino-acid polypeptide reads, in one-letter code: Zinc finger protein basonuclin-1 (994 aa).

The segment at M1–R29 is disordered. The hydrophobic stretch occupies residues M240–F249. C2H2-type zinc fingers lie at residues V357–H380 and H385–H414. Disordered regions lie at residues R402–D425 and T444–I472. The Nuclear localization signal motif lies at P533 to K539. Residues S537 and S541 each carry the phosphoserine modification. Residues N555 to T639 form a disordered region. Over residues S563–E578 the composition is skewed to acidic residues. Residues P603–V614 show a composition bias toward basic and acidic residues. Residues I615–H630 show a composition bias toward polar residues. 2 consecutive C2H2-type zinc fingers follow at residues F720 to H743 and H748 to H775. The segment covering S859–D877 has biased composition (low complexity). Positions S859–E881 are disordered. 2 consecutive C2H2-type zinc fingers follow at residues I928–H951 and H956–H983. The tract at residues V970–Q994 is disordered.

In terms of assembly, interacts with HSF2BP (via C-terminus). In terms of processing, phosphorylation on Ser-537 and Ser-541 leads to cytoplasmic localization. As to expression, in epidermis, primarily detected in cells of the basal or immediately suprabasal layers (at protein level). In hair follicles, mainly expressed in the outer root sheath (at protein level). Expressed in epidermis, testis and foreskin, and to a lower extent in thymus, spleen, mammary glands, placenta, brain and heart. Expressed in the ovary, notably in oocytes.

It localises to the nucleus. The protein localises to the cytoplasm. The protein resides in the nucleoplasm. Its function is as follows. Transcriptional activator. It is likely involved in the regulation of keratinocytes terminal differentiation in squamous epithelia and hair follicles. Required for the maintenance of spermatogenesis. It is involved in the positive regulation of oocyte maturation, probably acting through the control of BMP15 levels and regulation of AKT signaling cascade. May also play a role in the early development of embryos. In Homo sapiens (Human), this protein is Zinc finger protein basonuclin-1 (BNC1).